The sequence spans 63 residues: Large ribosomal subunit protein bL32 (63 aa).

The interval 1 to 20 (MANPKAKMSKSRRDKRRAQF) is disordered. Residues 7–18 (KMSKSRRDKRRA) are compositionally biased toward basic residues.

The protein belongs to the bacterial ribosomal protein bL32 family.

The chain is Large ribosomal subunit protein bL32 from Chlorobaculum parvum (strain DSM 263 / NCIMB 8327) (Chlorobium vibrioforme subsp. thiosulfatophilum).